The chain runs to 604 residues: Phenylalanine--tRNA ligase beta subunit (604 aa).

Residues tyrosine 327–proline 402 enclose the B5 domain. Residues aspartate 380, aspartate 386, glutamate 389, and glutamate 390 each contribute to the Mg(2+) site.

The protein belongs to the phenylalanyl-tRNA synthetase beta subunit family. Type 2 subfamily. In terms of assembly, tetramer of two alpha and two beta subunits. The cofactor is Mg(2+).

It is found in the cytoplasm. It catalyses the reaction tRNA(Phe) + L-phenylalanine + ATP = L-phenylalanyl-tRNA(Phe) + AMP + diphosphate + H(+). In Treponema pallidum subsp. pallidum (strain SS14), this protein is Phenylalanine--tRNA ligase beta subunit.